Reading from the N-terminus, the 401-residue chain is Rab-interacting lysosomal protein (401 aa).

The region spanning 11 to 101 is the RH1 domain; the sequence is PGWGSREAAG…REENERLRRE (91 aa). Positions 75-181 form a coiled coil; the sequence is DSLQVSAQPA…AQDRERERQQ (107 aa). 2 disordered regions span residues 167–239 and 304–388; these read TQLR…SEAG and KMLG…SALH. Positions 172–181 are enriched in basic and acidic residues; sequence AQDRERERQQ. The region spanning 240–316 is the RH2 domain; it reads QCRFSREEFE…GTPEEAESSE (77 aa). Residues 272–333 form a necessary for interaction with RAB7A and RAB34, lysosomal distribution and morphology region; sequence FQRELLTDHR…LLSDDKGDHP (62 aa). Thr308 is subject to Phosphothreonine. Over residues 310–319 the composition is skewed to acidic residues; it reads EEAESSEDEA. 2 positions are modified to phosphoserine: Ser314 and Ser315.

As to quaternary structure, homodimer. Interacts with RAB7A. Interacts with RAB34. Identified in a complex with MREG and DCTN1; interacts directly with MREG. Interacts with CLN3. Interacts with FLCN; the interaction is direct and promotes association between RILP and RAB34. In terms of tissue distribution, ubiquitous. Strongly expressed in fetal heart, heart, stomach, spleen, adrenal gland, thyroid gland, salivary gland, fetal liver, liver and lung. Poorly expressed in brain.

Its subcellular location is the late endosome membrane. It localises to the lysosome membrane. The protein localises to the cytoplasmic vesicle. The protein resides in the phagosome membrane. Functionally, rab effector playing a role in late endocytic transport to degradative compartments. Involved in the regulation of lysosomal morphology and distribution. Induces recruitment of dynein-dynactin motor complexes to Rab7A-containing late endosome and lysosome compartments. Promotes centripetal migration of phagosomes and the fusion of phagosomes with the late endosomes and lysosomes. The chain is Rab-interacting lysosomal protein (RILP) from Homo sapiens (Human).